The chain runs to 572 residues: Proteinaceous RNase P 1, chloroplastic/mitochondrial (572 aa).

The N-terminal 70 residues, 1 to 70 (MLRLTCFTPS…SRHLCTLPLA (70 aa)), are a transit peptide targeting the chloroplast and mitochondrion. PPR repeat units follow at residues 96-130 (PEALLKQKLDMCSKKGDVLEALRLYDEARRNGVQL), 136-174 (NVLLYVCSLAEAATESSPNPGLSRGFDIFKQMIVDKVVP), 175-209 (NEATFTNGARLAVAKDDPEMAFDMVKQMKAFGIQP), and 210-244 (RLRSYGPALFGFCRKGDADKAYEVDAHMVESEVVP). The PRORP domain occupies 338-565 (MDENGVCKCC…DLQTSRQWLC (228 aa)). The Zn(2+) site is built by Cys344 and Cys347. 4 residues coordinate Mn(2+): Asp399, Asp474, Asp475, and Asp493. His548 and Cys565 together coordinate Zn(2+).

Belongs to the PPR family. P subfamily. Mg(2+) is required as a cofactor. Mn(2+) serves as cofactor.

The protein resides in the mitochondrion. It localises to the plastid. The protein localises to the chloroplast. It catalyses the reaction Endonucleolytic cleavage of RNA, removing 5'-extranucleotides from tRNA precursor.. Functionally, endonuclease RNase P responsible for the 5' maturation of tRNA precursors. Preferentially cleaves at the unusual cleavage site, but also able to cleave at the classical cleavage site. Also involved in the maturation of mRNAs in mitochondria. The protein is Proteinaceous RNase P 1, chloroplastic/mitochondrial (PRORP1) of Arabidopsis thaliana (Mouse-ear cress).